A 92-amino-acid chain; its full sequence is Small ribosomal subunit protein uS19 (92 aa).

This sequence belongs to the universal ribosomal protein uS19 family.

Protein S19 forms a complex with S13 that binds strongly to the 16S ribosomal RNA. This Synechocystis sp. (strain ATCC 27184 / PCC 6803 / Kazusa) protein is Small ribosomal subunit protein uS19 (rpsS).